We begin with the raw amino-acid sequence, 194 residues long: Imidazoleglycerol-phosphate dehydratase (194 aa).

Belongs to the imidazoleglycerol-phosphate dehydratase family.

The protein resides in the cytoplasm. The catalysed reaction is D-erythro-1-(imidazol-4-yl)glycerol 3-phosphate = 3-(imidazol-4-yl)-2-oxopropyl phosphate + H2O. It functions in the pathway amino-acid biosynthesis; L-histidine biosynthesis; L-histidine from 5-phospho-alpha-D-ribose 1-diphosphate: step 6/9. The sequence is that of Imidazoleglycerol-phosphate dehydratase from Bacillus pumilus (strain SAFR-032).